The chain runs to 255 residues: Syntaxin-6 (255 aa).

Ser-2 carries the N-acetylserine modification. Residue Ser-2 is modified to Phosphoserine. Residues Ser-2–Gln-112 form an interaction with BLTP3B region. The tract at residues Ser-2–Gln-168 is required for interaction with VPS51. The Cytoplasmic segment spans residues Ser-2–Gln-234. A coiled-coil region spans residues Glu-41–Asn-74. Ser-129 and Ser-152 each carry phosphoserine. Residues Gln-163–Val-225 enclose the t-SNARE coiled-coil homology domain. A helical; Anchor for type IV membrane protein membrane pass occupies residues Trp-235 to Leu-255.

It belongs to the syntaxin family. In terms of assembly, identified in a complex containing STX6, STX12, VAMP4 and VTI1A. Binds EEA1. Interacts with VPS45A and GOPC. Interacts with MARCHF2; the interaction promotes MARCHF2-mediated ubiquitination and degradation of CFTR. Interacts with MARCHF3. Interacts with BLTP3B (via C-terminal coiled-coil domain). Interacts with BAIAP3; this interaction is increased in the presence of calcium. Interacts (via N-terminus) with VPS51. Interacts with VPS13B. As to expression, widely expressed, with relatively higher expression in brain, lung and kidney.

It is found in the golgi apparatus membrane. The protein localises to the golgi apparatus. It localises to the trans-Golgi network membrane. The protein resides in the recycling endosome membrane. In terms of biological role, SNARE promoting movement of transport vesicles to target membranes. Targets endosomes to the trans-Golgi network, and may therefore function in retrograde trafficking. Together with SNARE STX12, promotes movement of vesicles from endosomes to the cell membrane, and may therefore function in the endocytic recycling pathway. This chain is Syntaxin-6 (Stx6), found in Rattus norvegicus (Rat).